A 155-amino-acid polypeptide reads, in one-letter code: Cyanate hydratase (155 aa).

Residues Arg95, Glu98, and Ser121 contribute to the active site.

It belongs to the cyanase family.

The enzyme catalyses cyanate + hydrogencarbonate + 3 H(+) = NH4(+) + 2 CO2. In terms of biological role, catalyzes the reaction of cyanate with bicarbonate to produce ammonia and carbon dioxide. The protein is Cyanate hydratase of Pseudomonas syringae pv. tomato (strain ATCC BAA-871 / DC3000).